A 539-amino-acid polypeptide reads, in one-letter code: GMP synthase [glutamine-hydrolyzing] (539 aa).

Residues 4–202 form the Glutamine amidotransferase type-1 domain; the sequence is KILILDFGSQ…VLQIAGAKPD (199 aa). Cys-81 serves as the catalytic Nucleophile. Residues His-176 and Glu-178 contribute to the active site. In terms of domain architecture, GMPS ATP-PPase spans 203 to 395; it reads WIMKNHIEEA…LGLPPEMVYR (193 aa). Residue 230–236 coordinates ATP; the sequence is SGGVDSS.

Homodimer.

The enzyme catalyses XMP + L-glutamine + ATP + H2O = GMP + L-glutamate + AMP + diphosphate + 2 H(+). It functions in the pathway purine metabolism; GMP biosynthesis; GMP from XMP (L-Gln route): step 1/1. Its function is as follows. Catalyzes the synthesis of GMP from XMP. The sequence is that of GMP synthase [glutamine-hydrolyzing] from Burkholderia cenocepacia (strain ATCC BAA-245 / DSM 16553 / LMG 16656 / NCTC 13227 / J2315 / CF5610) (Burkholderia cepacia (strain J2315)).